The primary structure comprises 141 residues: Ly6/PLAUR domain-containing protein 1 (141 aa).

The first 20 residues, M1–A20, serve as a signal peptide directing secretion. 6 disulfides stabilise this stretch: C25/C54, C28/C37, C46/C71, C77/C100, C88/C97, and C101/C106. The region spanning C25–N107 is the UPAR/Ly6 domain. N45 carries N-linked (GlcNAc...) asparagine glycosylation. Residue S117 is the site of GPI-anchor amidated serine attachment. A propeptide spans A118–C141 (removed in mature form).

Interacts with CHRNA4 and nAChRs containing alpha-4:beta-2 (CHRNA4:CHRNB2) and alpha-7 (CHRNA7) subunits.

The protein localises to the cell membrane. Believed to act as a modulator of nicotinic acetylcholine receptors (nAChRs) activity. In vitro increases receptor desensitization and decreases affinity for ACh of alpha-4:beta-2-containing nAChRs. May play a role in the intracellular trafficking of alpha-4:beta-2 and alpha-7-containing nAChRs and may inhibit their expression at the cell surface. May be involved in the control of anxiety. The sequence is that of Ly6/PLAUR domain-containing protein 1 (LYPD1) from Homo sapiens (Human).